Here is a 301-residue protein sequence, read N- to C-terminus: NDP-polyphosphate phosphotransferase 3 (301 aa).

Over residues 1–12 (MNRNGSTKDPRR) the composition is skewed to basic and acidic residues. The segment at 1 to 21 (MNRNGSTKDPRRMTGAATGEI) is disordered.

Belongs to the polyphosphate kinase 2 (PPK2) family. Class I subfamily. It depends on Mg(2+) as a cofactor.

The catalysed reaction is [phosphate](n) + ATP = [phosphate](n+1) + ADP. It catalyses the reaction [phosphate](n) + CTP = [phosphate](n+1) + CDP. The enzyme catalyses [phosphate](n) + GTP = [phosphate](n+1) + GDP. It carries out the reaction [phosphate](n) + UTP = [phosphate](n+1) + UDP. Its function is as follows. Uses inorganic polyphosphate (polyP) as a donor to convert NDP to NTP. PolyP hydrolysis is slightly faster with UDP, but it can also use ADP, GDP and CDP. This Ruegeria pomeroyi (strain ATCC 700808 / DSM 15171 / DSS-3) (Silicibacter pomeroyi) protein is NDP-polyphosphate phosphotransferase 3.